Here is a 1196-residue protein sequence, read N- to C-terminus: FIP1[V]-like protein (1196 aa).

Disordered regions lie at residues methionine 1 to glycine 102, glycine 117 to tyrosine 248, glycine 268 to leucine 300, glycine 413 to arginine 472, and serine 485 to proline 1174. Positions phenylalanine 18–proline 31 are enriched in pro residues. Residues glycine 117–glutamate 126 are compositionally biased toward polar residues. A compositionally biased stretch (gly residues) spans valine 129–glycine 141. 2 stretches are compositionally biased toward acidic residues: residues glutamate 142 to leucine 154 and asparagine 179 to proline 190. A compositionally biased stretch (gly residues) spans alanine 226–threonine 236. Residues glycine 268–glycine 278 show a composition bias toward low complexity. The span at lysine 518–arginine 548 shows a compositional bias: basic and acidic residues. Positions serine 549 to proline 561 are enriched in polar residues. Composition is skewed to basic and acidic residues over residues arginine 565 to lysine 592 and glycine 608 to serine 641. Residues arginine 643 to histidine 657 are compositionally biased toward polar residues. Basic and acidic residues-rich tracts occupy residues lysine 661–arginine 673, serine 699–glutamate 802, serine 810–arginine 918, arginine 925–alanine 945, and asparagine 953–aspartate 971. Short sequence motifs (nuclear localization signal) lie at residues aspartate 704–valine 711 and arginine 734–aspartate 741. The span at glutamate 998 to alanine 1021 shows a compositional bias: polar residues. 3 stretches are compositionally biased toward basic and acidic residues: residues aspartate 1046 to valine 1071, lysine 1103 to lysine 1137, and threonine 1151 to serine 1163.

This sequence belongs to the FIP1 family. As to quaternary structure, component of the cleavage and polyadenylation specificity factor (CPSF) complex. Forms a complex with cleavage and polyadenylation specificity factor (CPSF) subunits CFIS1, CFIS2, CPSF30, CSTF50, CSTF64, CSTF77, FIPS3, PABN1, PABN2, PABN3, PAPS4, CFIM25 and PABN1. Binds RNA. As to expression, expressed in leaves, stems, flower tissues and roots.

It is found in the nucleus. Functionally, essential gene. Component of the cleavage and polyadenylation specificity factor (CPSF) complex that plays a key role in pre-mRNA 3'-end formation, recognizing the AAUAAA signal sequence and interacting with poly(A) polymerase and other factors to bring about cleavage and poly(A) addition. FIP1L1 contributes to poly(A) site recognition and stimulates poly(A) addition. Binds to U-rich RNA sequence elements surrounding the poly(A) site. May act to tether poly(A) polymerase to the CPSF complex. The sequence is that of FIP1[V]-like protein from Arabidopsis thaliana (Mouse-ear cress).